The chain runs to 588 residues: Succinate dehydrogenase flavoprotein subunit (588 aa).

FAD is bound by residues 14–19, 37–52, and Asp221; these read GAGGAG and SKVF…AQGG. His45 carries the post-translational modification Tele-8alpha-FAD histidine. Substrate is bound by residues His242 and Thr254. Catalysis depends on Arg286, which acts as the Proton acceptor. Substrate is bound at residue His354. Glu388 contacts FAD. Arg399 lines the substrate pocket. 404–405 is an FAD binding site; the sequence is SL.

This sequence belongs to the FAD-dependent oxidoreductase 2 family. FRD/SDH subfamily. As to quaternary structure, part of an enzyme complex containing four subunits: a flavoprotein, an iron-sulfur, cytochrome b-556, and a hydrophobic anchor protein. The cofactor is FAD.

Its subcellular location is the cell inner membrane. It catalyses the reaction a quinone + succinate = fumarate + a quinol. The protein operates within carbohydrate metabolism; tricarboxylic acid cycle; fumarate from succinate (bacterial route): step 1/1. In terms of biological role, two distinct, membrane-bound, FAD-containing enzymes are responsible for the catalysis of fumarate and succinate interconversion; the fumarate reductase is used in anaerobic growth, and the succinate dehydrogenase is used in aerobic growth. The protein is Succinate dehydrogenase flavoprotein subunit (sdhA) of Salmonella typhimurium (strain LT2 / SGSC1412 / ATCC 700720).